Here is a 500-residue protein sequence, read N- to C-terminus: MRGELWLLVLVLREAARALSPQPGAGHDEGPGSGWAAKGTVRGWNRRARESPGHVSEPDRTQLSQDLGGGTLAMDTLPDNRTRVVEDNHSYYVSRLYGPSEPHSRELWVDVAEANRSQVKIHTILSNTHRQASRVVLSFDFPFYGHPLRQITIATGGFIFMGDVIHRMLTATQYVAPLMANFNPGYSDNSTVVYFDNGTVFVVQWDHVYLQGWEDKGSFTFQAALHHDGRIVFAYKEIPMSVPEISSSQHPVKTGLSDAFMILNPSPDVPESRRRSIFEYHRIELDPSKVTSMSAVEFTPLPTCLQHRSCDACMSSDLTFNCSWCHVLQRCSSGFDRYRQEWMDYGCAQEAEGRMCEDFQDEDHDSASPDTSFSPYDGDLTTTSSSLFIDSLTTEDDTKLNPYAGGDGLQNNLSPKTKGTPVHLGTIVGIVLAVLLVAAIILAGIYINGHPTSNAALFFIERRPHHWPAMKFRSHPDHSTYAEVEPSGHEKEGFMEAEQC.

Positions 1–18 are cleaved as a signal peptide; it reads MRGELWLLVLVLREAARA. Residues 19-426 lie on the Extracellular side of the membrane; it reads LSPQPGAGHD…TKGTPVHLGT (408 aa). Disordered regions lie at residues 20 to 39 and 46 to 78; these read SPQPGAGHDEGPGSGWAAKG and RRARESPGHVSEPDRTQLSQDLGGGTLAMDTLP. An O-linked (Xyl...) (chondroitin sulfate) serine glycan is attached at Ser-33. Residues 47–60 show a composition bias toward basic and acidic residues; the sequence is RARESPGHVSEPDR. Residues Asn-80 and Asn-197 are each glycosylated (N-linked (GlcNAc...) asparagine). Residues 359–379 form a disordered region; the sequence is FQDEDHDSASPDTSFSPYDGD. Over residues 368–379 the composition is skewed to polar residues; the sequence is SPDTSFSPYDGD. Residues 427-447 form a helical membrane-spanning segment; the sequence is IVGIVLAVLLVAAIILAGIYI. At 448 to 500 the chain is on the cytoplasmic side; the sequence is NGHPTSNAALFFIERRPHHWPAMKFRSHPDHSTYAEVEPSGHEKEGFMEAEQC. Residues 479–494 show a composition bias toward basic and acidic residues; that stretch reads STYAEVEPSGHEKEGF. The interval 479–500 is disordered; it reads STYAEVEPSGHEKEGFMEAEQC.

The protein belongs to the plexin family. In terms of assembly, interacts with NID1. May interact with CTTN. In terms of processing, N-glycosylated. Detected in urine (at protein level). Detected in endothelial cells from colorectal cancer, and in endothelial cells from primary cancers of the lung, liver, pancreas, breast and brain. Not detectable in endothelial cells from normal tissue. Expressed in fibrovascular membrane with increased expression in individuals with proliferative diabetic retinopathy.

It is found in the secreted. Its subcellular location is the cell membrane. It localises to the cell junction. The protein localises to the tight junction. The protein resides in the cytoplasm. In terms of biological role, plays a critical role in endothelial cell capillary morphogenesis. In Homo sapiens (Human), this protein is Plexin domain-containing protein 1 (PLXDC1).